The following is a 486-amino-acid chain: MSLKEDDFGKDNSRNIESYTGRIFDVYIQKDSYSQSALDDMFPEAVVSTAACVKNEAEDNINLIDTHPQFELVNTGLGAKSDDLKSPSAKATFTDKQRKNEVPNISVSNYFPGQSSETSSTTESWTIGCDKWSEKVEEAFLEALRLIMKNGTTKIKIRNANFGRNELISLYIKHKTNEFRTKKQISSHIQVWKKTIQNKIKDSLTLSSKEKELLHLIEHGAEQTTENSNLFYDIFEEIIDSLPSVSDSGSLTPKNLYVSNNSSGLSVHSKLLTPITASNEKKIENFIKTNAASQAKTPLIYAKHIYENIDGYKCVPSKRPLEQLSPTELHQGDRPNKASFSNKKAILESAKKIEIEQRKIINKYQRISRIQEHESNPEFSSNSNSGSEYESEEEVVPRSATVTQLQSRPVPYYKNNGMPYSLSKVRGRPMYPRPAEDAYNANYIQGLPQYQTSYFSQLLLSSPQHYEHSPHQRNFTPSNQSHGNFY.

Serine 2 carries the N-acetylserine modification. Residues 125–199 (WTIGCDKWSE…QVWKKTIQNK (75 aa)) constitute a DNA-binding region (TEA). Residue serine 325 is modified to Phosphoserine. Disordered regions lie at residues 372-410 (EHES…SRPV) and 465-486 (HYEH…GNFY). Positions 377–388 (PEFSSNSNSGSE) are enriched in low complexity. A compositionally biased stretch (polar residues) spans 472 to 486 (QRNFTPSNQSHGNFY).

This sequence belongs to the TEC1 family.

Its subcellular location is the nucleus. Functionally, TEC1 is involved in the activation of TY1 and TY1-mediated gene expression. It is not involved in mating or sporulation processes. This chain is Ty transcription activator TEC1 (TEC1), found in Saccharomyces cerevisiae (strain ATCC 204508 / S288c) (Baker's yeast).